A 429-amino-acid polypeptide reads, in one-letter code: MMTQTDLSAFFGADLATADRDIFDRIGRELGRQQNQIELIASENIVSKAVLEAQGSILTNKYAEGYPGKRYYGGCEYVDEIETIAIERAKALFGAGFANVQPHSGSQANQAVFMALLQPGDTFLGMDLAAGGHLTHGSPANQSGKWFKPISYSVRQQDQLIDYDGVAEVAQREKPKLIIAGGSAYSREIDFAKFREIADSIGAYLMVDMAHYAGLIAGGAYANPIPHAHIVTTTTHKTLRGPRGGLVLTNDEAIIKKVNSAVFPGLQGGPLEHVIAAKAVAFGEALQPSFKDYARQVVANARALAEALLKSGVNIVSGGTDSHLMLVDLRPKGVTGRDAEHSLERAYMTCNKNGVPFDTAPFTITSGIRLGTPAGTTRGFKEAEFTRVGELIGEVVNGLAVNGPEGNAAVEAKVREEVLALTGRFPIYN.

(6S)-5,6,7,8-tetrahydrofolate is bound by residues leucine 128 and 132-134 (GHL). Position 237 is an N6-(pyridoxal phosphate)lysine (lysine 237).

It belongs to the SHMT family. In terms of assembly, homodimer. The cofactor is pyridoxal 5'-phosphate.

The protein localises to the cytoplasm. It catalyses the reaction (6R)-5,10-methylene-5,6,7,8-tetrahydrofolate + glycine + H2O = (6S)-5,6,7,8-tetrahydrofolate + L-serine. Its pathway is one-carbon metabolism; tetrahydrofolate interconversion. It participates in amino-acid biosynthesis; glycine biosynthesis; glycine from L-serine: step 1/1. Catalyzes the reversible interconversion of serine and glycine with tetrahydrofolate (THF) serving as the one-carbon carrier. This reaction serves as the major source of one-carbon groups required for the biosynthesis of purines, thymidylate, methionine, and other important biomolecules. Also exhibits THF-independent aldolase activity toward beta-hydroxyamino acids, producing glycine and aldehydes, via a retro-aldol mechanism. The chain is Serine hydroxymethyltransferase from Caulobacter vibrioides (strain ATCC 19089 / CIP 103742 / CB 15) (Caulobacter crescentus).